We begin with the raw amino-acid sequence, 260 residues long: Tropinone reductase homolog At2g29330 (260 aa).

13–37 (LVTGGASGIGHAIVEELAGFGAKIH) provides a ligand contact to NADP(+). Ser146 provides a ligand contact to substrate. Tyr159 functions as the Proton acceptor in the catalytic mechanism.

It belongs to the short-chain dehydrogenases/reductases (SDR) family. SDR65C subfamily.

In terms of biological role, reductase active only on small flexible lipophilic carbonyls. No activity with cyclic monoterpenes, tropinone, nitrogen-containing tropinone analogs, tropine or pseudotropine as substrate. In Arabidopsis thaliana (Mouse-ear cress), this protein is Tropinone reductase homolog At2g29330.